We begin with the raw amino-acid sequence, 749 residues long: Putative Xaa-Pro aminopeptidase FRA1 (749 aa).

The interval 1–33 is disordered; that stretch reads MTSKPSTSDGRAHSISHVPGTHMRGTSASHSPR. Residues Ser69, Ser92, and Ser95 each carry the phosphoserine modification. Positions 551, 562, 660, and 674 each coordinate Mn(2+).

It belongs to the peptidase M24B family. As to quaternary structure, homodimer. Interacts with FRA2. Requires Mn(2+) as cofactor.

The protein resides in the cytoplasm. The enzyme catalyses Release of any N-terminal amino acid, including proline, that is linked to proline, even from a dipeptide or tripeptide.. Functionally, involved in the regulation of the iron regulon in responss to decreased mitochondrial iron-sulfur cluster synthesis. The protein is Putative Xaa-Pro aminopeptidase FRA1 (FRA1) of Saccharomyces cerevisiae (strain ATCC 204508 / S288c) (Baker's yeast).